The following is a 281-amino-acid chain: Undecaprenyl-diphosphatase (281 aa).

8 helical membrane-spanning segments follow: residues 1–21 (MNVLQGLLLGLIQGLTEFLPI), 45–65 (WTAFIAVIQLGTMAAVLIYFA), 93–113 (SKLGWYVILGSLPVATFGLVF), 125–145 (LIVISASLIVFGILLGVSEVV), 155–175 (ISWLDALVVGFAQVMALVPGA), 195–215 (AARFSFLLSIPAVMASGLLEF), 227–247 (FLVLASATLMSAVSGYLTIAF), and 256–276 (STNVFVVYRVVLGGALLWMVF).

The protein belongs to the UppP family.

It is found in the cell inner membrane. The enzyme catalyses di-trans,octa-cis-undecaprenyl diphosphate + H2O = di-trans,octa-cis-undecaprenyl phosphate + phosphate + H(+). Its function is as follows. Catalyzes the dephosphorylation of undecaprenyl diphosphate (UPP). Confers resistance to bacitracin. The sequence is that of Undecaprenyl-diphosphatase from Syntrophobacter fumaroxidans (strain DSM 10017 / MPOB).